We begin with the raw amino-acid sequence, 292 residues long: NAD kinase (292 aa).

Catalysis depends on Asp-73, which acts as the Proton acceptor. Residues 73–74 (DG), 147–148 (NE), His-158, Arg-175, Asp-177, 188–193 (TAYSLS), and Gln-247 each bind NAD(+).

Belongs to the NAD kinase family. It depends on a divalent metal cation as a cofactor.

It localises to the cytoplasm. It catalyses the reaction NAD(+) + ATP = ADP + NADP(+) + H(+). Involved in the regulation of the intracellular balance of NAD and NADP, and is a key enzyme in the biosynthesis of NADP. Catalyzes specifically the phosphorylation on 2'-hydroxyl of the adenosine moiety of NAD to yield NADP. The protein is NAD kinase of Pectobacterium atrosepticum (strain SCRI 1043 / ATCC BAA-672) (Erwinia carotovora subsp. atroseptica).